The sequence spans 257 residues: UPF0246 protein BF4021 (257 aa).

It belongs to the UPF0246 family.

This is UPF0246 protein BF4021 from Bacteroides fragilis (strain YCH46).